The sequence spans 236 residues: Ubiquinone biosynthesis O-methyltransferase (236 aa).

R36, G56, D77, and M125 together coordinate S-adenosyl-L-methionine.

It belongs to the methyltransferase superfamily. UbiG/COQ3 family.

It catalyses the reaction a 3-demethylubiquinol + S-adenosyl-L-methionine = a ubiquinol + S-adenosyl-L-homocysteine + H(+). The enzyme catalyses a 3-(all-trans-polyprenyl)benzene-1,2-diol + S-adenosyl-L-methionine = a 2-methoxy-6-(all-trans-polyprenyl)phenol + S-adenosyl-L-homocysteine + H(+). The protein operates within cofactor biosynthesis; ubiquinone biosynthesis. Functionally, O-methyltransferase that catalyzes the 2 O-methylation steps in the ubiquinone biosynthetic pathway. This chain is Ubiquinone biosynthesis O-methyltransferase, found in Glaesserella parasuis serovar 5 (strain SH0165) (Haemophilus parasuis).